Consider the following 43-residue polypeptide: Protein PsbN (43 aa).

Residues 4 to 24 (GILVVIFISCLLVSFTGYTIY) traverse the membrane as a helical segment.

This sequence belongs to the PsbN family.

The protein resides in the plastid. It is found in the chloroplast thylakoid membrane. Its function is as follows. May play a role in photosystem I and II biogenesis. The polypeptide is Protein PsbN (Chaetosphaeridium globosum (Charophycean green alga)).